The sequence spans 234 residues: Inosine triphosphate pyrophosphatase (234 aa).

Position 11-16 (11-16 (SGNKGK)) interacts with ITP. Glu-40 is a binding site for Mg(2+). Residues Lys-53, 81-82 (DT), Lys-98, 176-179 (FGWD), Lys-203, and 208-209 (HR) each bind ITP.

This sequence belongs to the HAM1 NTPase family. As to quaternary structure, homodimer. Mg(2+) serves as cofactor. Mn(2+) is required as a cofactor.

It localises to the cytoplasm. The catalysed reaction is ITP + H2O = IMP + diphosphate + H(+). It catalyses the reaction dITP + H2O = dIMP + diphosphate + H(+). It carries out the reaction XTP + H2O = XMP + diphosphate + H(+). In terms of biological role, pyrophosphatase that hydrolyzes non-canonical purine nucleotides such as inosine triphosphate (ITP), deoxyinosine triphosphate (dITP) or xanthosine 5'-triphosphate (XTP) to their respective monophosphate derivatives. The enzyme does not distinguish between the deoxy- and ribose forms. Probably excludes non-canonical purines from RNA and DNA precursor pools, thus preventing their incorporation into RNA and DNA and avoiding chromosomal lesions. The chain is Inosine triphosphate pyrophosphatase from Leishmania major.